A 402-amino-acid polypeptide reads, in one-letter code: Type II NADH:quinone oxidoreductase (402 aa).

Residues 12–16 (GAGYA), 39–40 (NK), and Val-83 contribute to the FAD site. Residue Glu-172 is part of the active site. Residues Asp-302, 319 to 320 (AQ), and Lys-379 each bind FAD.

This sequence belongs to the NADH dehydrogenase family. FAD is required as a cofactor.

The protein resides in the cell membrane. The catalysed reaction is a quinone + NADH + H(+) = a quinol + NAD(+). Functionally, alternative, nonproton pumping NADH:quinone oxidoreductase that delivers electrons to the respiratory chain by oxidation of NADH and reduction of quinones, and contributes to the regeneration of NAD(+). The protein is Type II NADH:quinone oxidoreductase of Staphylococcus haemolyticus (strain JCSC1435).